Consider the following 403-residue polypeptide: Sex hormone-binding globulin (403 aa).

Residues 1-30 (MEKGEVASLRCRLLLLLLLLTLPPTHQGRT) form the signal peptide. Laminin G-like domains follow at residues 46–218 (KYLS…LGNC) and 225–391 (GLFF…THSC). Cysteine 194 and cysteine 218 are disulfide-bonded. N-linked (GlcNAc...) asparagine glycosylation occurs at asparagine 274. A disulfide bridge connects residues cysteine 363 and cysteine 391. N-linked (GlcNAc...) asparagine glycosylation occurs at asparagine 397.

In terms of assembly, homodimer. In terms of tissue distribution, isoform 2 is only expressed in the liver.

It localises to the secreted. Functionally, functions as an androgen transport protein, but may also be involved in receptor mediated processes. Each dimer binds one molecule of steroid. Specific for 5-alpha-dihydrotestosterone, testosterone, and 17-beta-estradiol. Regulates the plasma metabolic clearance rate of steroid hormones by controlling their plasma concentration. In Rattus norvegicus (Rat), this protein is Sex hormone-binding globulin (Shbg).